The primary structure comprises 307 residues: NAD kinase (307 aa).

Asp80 (proton acceptor) is an active-site residue. Residues 80-81, His85, 154-155, His165, His182, Asp184, 195-200, and Gln254 contribute to the NAD(+) site; these read DG, ND, and TAYALS.

It belongs to the NAD kinase family. A divalent metal cation serves as cofactor.

The protein localises to the cytoplasm. The catalysed reaction is NAD(+) + ATP = ADP + NADP(+) + H(+). Involved in the regulation of the intracellular balance of NAD and NADP, and is a key enzyme in the biosynthesis of NADP. Catalyzes specifically the phosphorylation on 2'-hydroxyl of the adenosine moiety of NAD to yield NADP. The protein is NAD kinase of Acinetobacter baylyi (strain ATCC 33305 / BD413 / ADP1).